An 89-amino-acid chain; its full sequence is Mu-like prophage FluMu DNA-binding protein Ner (89 aa).

The segment at residues 57-76 (ERLVANAIGVPPEVIWAGRF) is a DNA-binding region (H-T-H motif).

It belongs to the ner transcriptional regulatory family.

Its function is as follows. Negative regulator of transcription starting from the Pe and Pc promoters of Mu. Also negatively regulates its own gene transcription. This Haemophilus influenzae (strain ATCC 51907 / DSM 11121 / KW20 / Rd) protein is Mu-like prophage FluMu DNA-binding protein Ner (nlp).